The primary structure comprises 126 residues: uncharacterized protein (126 aa).

2 stretches are compositionally biased toward basic residues: residues 21–31 (RKKRKKRKKRR) and 41–83 (RILK…RKRR). The tract at residues 21–83 (RKKRKKRKKR…RSPRKRRKRR (63 aa)) is disordered.

This is an uncharacterized protein from Saccharomyces cerevisiae (strain ATCC 204508 / S288c) (Baker's yeast).